The chain runs to 75 residues: Cytochrome c oxidase subunit 6C (75 aa).

Topologically, residues 1-13 (MASEVLVKPQMRG) are mitochondrial matrix. A helical membrane pass occupies residues 14–54 (LLARRLRIHMVGAFLVSLGVAALYKFGVAEPRKKAYADFYK). Residues 55–75 (NYSAEKDFEEMKKAGLFRSIK) lie on the Mitochondrial intermembrane side of the membrane.

This sequence belongs to the cytochrome c oxidase subunit 6c family. Component of the cytochrome c oxidase (complex IV, CIV), a multisubunit enzyme composed of 14 subunits. The complex is composed of a catalytic core of 3 subunits MT-CO1, MT-CO2 and MT-CO3, encoded in the mitochondrial DNA, and 11 supernumerary subunits COX4I, COX5A, COX5B, COX6A, COX6B, COX6C, COX7A, COX7B, COX7C, COX8 and NDUFA4, which are encoded in the nuclear genome. The complex exists as a monomer or a dimer and forms supercomplexes (SCs) in the inner mitochondrial membrane with NADH-ubiquinone oxidoreductase (complex I, CI) and ubiquinol-cytochrome c oxidoreductase (cytochrome b-c1 complex, complex III, CIII), resulting in different assemblies (supercomplex SCI(1)III(2)IV(1) and megacomplex MCI(2)III(2)IV(2)).

Its subcellular location is the mitochondrion inner membrane. It functions in the pathway energy metabolism; oxidative phosphorylation. Functionally, component of the cytochrome c oxidase, the last enzyme in the mitochondrial electron transport chain which drives oxidative phosphorylation. The respiratory chain contains 3 multisubunit complexes succinate dehydrogenase (complex II, CII), ubiquinol-cytochrome c oxidoreductase (cytochrome b-c1 complex, complex III, CIII) and cytochrome c oxidase (complex IV, CIV), that cooperate to transfer electrons derived from NADH and succinate to molecular oxygen, creating an electrochemical gradient over the inner membrane that drives transmembrane transport and the ATP synthase. Cytochrome c oxidase is the component of the respiratory chain that catalyzes the reduction of oxygen to water. Electrons originating from reduced cytochrome c in the intermembrane space (IMS) are transferred via the dinuclear copper A center (CU(A)) of subunit 2 and heme A of subunit 1 to the active site in subunit 1, a binuclear center (BNC) formed by heme A3 and copper B (CU(B)). The BNC reduces molecular oxygen to 2 water molecules using 4 electrons from cytochrome c in the IMS and 4 protons from the mitochondrial matrix. The chain is Cytochrome c oxidase subunit 6C (COX6C) from Plecturocebus donacophilus (Bolivian gray titi monkey).